Here is a 311-residue protein sequence, read N- to C-terminus: Nucleotide-binding protein Acel_1111 (311 aa).

An ATP-binding site is contributed by 30–37 (GLSGAGRS). 81–84 (DVRS) serves as a coordination point for GTP.

This sequence belongs to the RapZ-like family.

In terms of biological role, displays ATPase and GTPase activities. This is Nucleotide-binding protein Acel_1111 from Acidothermus cellulolyticus (strain ATCC 43068 / DSM 8971 / 11B).